Reading from the N-terminus, the 294-residue chain is Glucosamine kinase GspK (294 aa).

Thr12 is a binding site for ATP. Asp101 contributes to the substrate binding site. Thr122 contacts ATP. Residues 139-141 (GRE) and Asp146 each bind substrate. Gly202 is an ATP binding site.

This sequence belongs to the eukaryotic-type N-acetylglucosamine kinase family.

Its subcellular location is the cytoplasm. It catalyses the reaction D-glucosamine + ATP = D-glucosamine 6-phosphate + ADP + H(+). Its function is as follows. ATP-dependent kinase, which is specific for glucosamine. Does not show kinase activity with any other sugar. This is Glucosamine kinase GspK (gspK) from Vibrio cholerae serotype O1 (strain ATCC 39315 / El Tor Inaba N16961).